The primary structure comprises 589 residues: Aspartate--tRNA(Asp/Asn) ligase (589 aa).

An L-aspartate-binding site is contributed by glutamate 175. Positions 199 to 202 (QQLK) are aspartate. Residue arginine 221 coordinates L-aspartate. Residues 221–223 (RDE) and glutamine 230 contribute to the ATP site. Histidine 451 is an L-aspartate binding site. Residue glutamate 485 participates in ATP binding. An L-aspartate-binding site is contributed by arginine 492. 537-540 (GIDR) provides a ligand contact to ATP.

It belongs to the class-II aminoacyl-tRNA synthetase family. Type 1 subfamily. In terms of assembly, homodimer.

The protein resides in the cytoplasm. It catalyses the reaction tRNA(Asx) + L-aspartate + ATP = L-aspartyl-tRNA(Asx) + AMP + diphosphate. Aspartyl-tRNA synthetase with relaxed tRNA specificity since it is able to aspartylate not only its cognate tRNA(Asp) but also tRNA(Asn). Reaction proceeds in two steps: L-aspartate is first activated by ATP to form Asp-AMP and then transferred to the acceptor end of tRNA(Asp/Asn). The protein is Aspartate--tRNA(Asp/Asn) ligase of Roseiflexus sp. (strain RS-1).